Here is a 390-residue protein sequence, read N- to C-terminus: Neutrophil cytosol factor 1 (390 aa).

A PX domain is found at 4–125; sequence TFIRHIALLG…DFFKVRPDDL (122 aa). 2 consecutive SH3 domains span residues 156-215 and 226-285; these read IILQ…PLDS and YAGE…KSGQ. The interval 285 to 390 is disordered; it reads QDVSQAQRQI…STKRKLASAV (106 aa). Phosphoserine occurs at positions 303 and 304. Residues 309–318 are compositionally biased toward basic residues; it reads HSIHQRSRKR. Phosphoserine is present on residues Ser320, Ser328, Ser345, and Ser348.

Component of the phagocyte NADPH oxidase complex composed of an obligatory core heterodimer formed by the membrane proteins CYBA and CYBB and the cytosolic regulatory subunits NCF1/p47-phox, NCF2/p67-phox, NCF4/p40-phox and the small GTPase RAC1 or RAC2. Part of a cytosolic complex composed at least by NCF1, NCF2 and NCF4. Interacts (via C-terminus) with NCF2 (via the C-terminal SH3 domain). Interacts with NCF4. Interacts with CYBB. Interacts (via the second SH3 domain) with CYBA; interaction is phosphorylation-dependent. Interacts with NOXA1. Interacts with ADAM15. Interacts with TRAF4. Interacts with FASLG. Interacts with PARK7 (via C-terminus); the interaction is enhanced by LPS and modulates NCF1 phosphorylation and membrane translocation. Post-translationally, phosphorylated by PRKCD; phosphorylation induces activation of NCF1, leading to assembly and activation of the NADPH oxidase complex. In terms of tissue distribution, detected in peripheral blood monocytes and neutrophils (at protein level).

It localises to the cytoplasm. The protein resides in the cytosol. Its subcellular location is the membrane. Functionally, subunit of the phagocyte NADPH oxidase complex that mediates the transfer of electrons from cytosolic NADPH to O2 to produce the superoxide anion (O2(-)). In the activated complex, electrons are first transferred from NADPH to flavin adenine dinucleotide (FAD) and subsequently transferred via two heme molecules to molecular oxygen, producing superoxide through an outer-sphere reaction. Activation of the NADPH oxidase complex is initiated by the assembly of cytosolic subunits of the NADPH oxidase complex with the core NADPH oxidase complex to form a complex at the plasma membrane or phagosomal membrane. This activation process is initiated by phosphorylation dependent binding of the cytosolic NCF1/p47-phox subunit to the C-terminus of CYBA/p22-phox. This is Neutrophil cytosol factor 1 from Homo sapiens (Human).